A 184-amino-acid chain; its full sequence is MMSQPPKVLLLYAHPESQDSVANRVLLQPVQQLEHVTVHDLYAHYPDFFIDIHYEQQLLREHQIIVFQHPLYTYSCPALLKEWLDRVLARGFANGVGGHALTGKYWRSVITTGEPEGAYRAGGYNRYPMEDILRPFELTAAMCHMHWMNPMIIYWARRQKPEVLASHAQAYAQWLQSPLATGGH.

Belongs to the NAD(P)H dehydrogenase (quinone) family. KefG subfamily. Interacts with KefB.

Its subcellular location is the cell inner membrane. It carries out the reaction a quinone + NADH + H(+) = a quinol + NAD(+). The enzyme catalyses a quinone + NADPH + H(+) = a quinol + NADP(+). Its function is as follows. Regulatory subunit of a potassium efflux system that confers protection against electrophiles. Required for full activity of KefB. The chain is Glutathione-regulated potassium-efflux system ancillary protein KefG from Yersinia enterocolitica serotype O:8 / biotype 1B (strain NCTC 13174 / 8081).